The sequence spans 284 residues: MTAFFKKPKRYMPLRQREPKIDAPQGLMTKCPSCKYMHYTKQLNENHKVCDCGYHFPLHAQERIDMLVDEGSFERFAGPSVKANPLDFPDYEEKLTKDRKRTGIEEAVVCGKATIDGLPLVVCVMDARFRMGSMGAYVGEAIASAVRTATSLGLPVVLFTASGGARMQEGMVSLMQMANTSIALKEHDEAGLLYIAYLTHPTTGGVSASFAMLGDLNVAEPGALIGFAGRRIIEQTIREKLPENFQTAEFLLESGQLDAVIHREQMRSFLKKMIELHDGGVRHV.

The CoA carboxyltransferase N-terminal domain occupies 27-284 (LMTKCPSCKY…ELHDGGVRHV (258 aa)). Zn(2+)-binding residues include Cys31, Cys34, Cys50, and Cys52. The segment at 31-52 (CPSCKYMHYTKQLNENHKVCDC) adopts a C4-type zinc-finger fold.

It belongs to the AccD/PCCB family. As to quaternary structure, acetyl-CoA carboxylase is a heterohexamer composed of biotin carboxyl carrier protein (AccB), biotin carboxylase (AccC) and two subunits each of ACCase subunit alpha (AccA) and ACCase subunit beta (AccD). Zn(2+) is required as a cofactor.

The protein resides in the cytoplasm. It catalyses the reaction N(6)-carboxybiotinyl-L-lysyl-[protein] + acetyl-CoA = N(6)-biotinyl-L-lysyl-[protein] + malonyl-CoA. It participates in lipid metabolism; malonyl-CoA biosynthesis; malonyl-CoA from acetyl-CoA: step 1/1. Its function is as follows. Component of the acetyl coenzyme A carboxylase (ACC) complex. Biotin carboxylase (BC) catalyzes the carboxylation of biotin on its carrier protein (BCCP) and then the CO(2) group is transferred by the transcarboxylase to acetyl-CoA to form malonyl-CoA. This is Acetyl-coenzyme A carboxylase carboxyl transferase subunit beta from Exiguobacterium sp. (strain ATCC BAA-1283 / AT1b).